Reading from the N-terminus, the 467-residue chain is ATP synthase subunit beta (467 aa).

ATP is bound at residue 150–157 (GGAGVGKT).

The protein belongs to the ATPase alpha/beta chains family. In terms of assembly, F-type ATPases have 2 components, CF(1) - the catalytic core - and CF(0) - the membrane proton channel. CF(1) has five subunits: alpha(3), beta(3), gamma(1), delta(1), epsilon(1). CF(0) has three main subunits: a(1), b(2) and c(9-12). The alpha and beta chains form an alternating ring which encloses part of the gamma chain. CF(1) is attached to CF(0) by a central stalk formed by the gamma and epsilon chains, while a peripheral stalk is formed by the delta and b chains.

The protein resides in the cell inner membrane. The enzyme catalyses ATP + H2O + 4 H(+)(in) = ADP + phosphate + 5 H(+)(out). Produces ATP from ADP in the presence of a proton gradient across the membrane. The catalytic sites are hosted primarily by the beta subunits. The protein is ATP synthase subunit beta of Vibrio parahaemolyticus serotype O3:K6 (strain RIMD 2210633).